A 264-amino-acid chain; its full sequence is Chymotrypsin-like protease CTRL-1 (264 aa).

The first 18 residues, 1 to 18 (MLLLSLTLSLVLLGSSWG), serve as a signal peptide directing secretion. A propeptide spans 19-33 (CGIPAIKPALSFSQR) (activation peptide). Intrachain disulfides connect Cys-19/Cys-141, Cys-60/Cys-76, Cys-155/Cys-220, Cys-187/Cys-201, and Cys-210/Cys-239. The Peptidase S1 domain occupies 34 to 262 (IVNGENAVLG…FSTWINQVIA (229 aa)). His-75 functions as the Charge relay system in the catalytic mechanism. Asn-114 carries an N-linked (GlcNAc...) asparagine glycan. The active-site Charge relay system is Asp-121. Ser-214 (charge relay system) is an active-site residue.

It belongs to the peptidase S1 family.

This chain is Chymotrypsin-like protease CTRL-1 (CTRL), found in Homo sapiens (Human).